A 474-amino-acid chain; its full sequence is A-type ATP synthase subunit B (474 aa).

Belongs to the ATPase alpha/beta chains family. In terms of assembly, has multiple subunits with at least A(3), B(3), C, D, E, F, H, I and proteolipid K(x).

Its subcellular location is the cell membrane. Its function is as follows. Component of the A-type ATP synthase that produces ATP from ADP in the presence of a proton gradient across the membrane. The B chain is a regulatory subunit. The chain is A-type ATP synthase subunit B from Halorubrum lacusprofundi (strain ATCC 49239 / DSM 5036 / JCM 8891 / ACAM 34).